The primary structure comprises 223 residues: Cytidylate kinase (223 aa).

11–19 (GPAGVGKST) is an ATP binding site.

The protein belongs to the cytidylate kinase family. Type 1 subfamily.

The protein localises to the cytoplasm. The catalysed reaction is CMP + ATP = CDP + ADP. It carries out the reaction dCMP + ATP = dCDP + ADP. This is Cytidylate kinase from Maridesulfovibrio salexigens (strain ATCC 14822 / DSM 2638 / NCIMB 8403 / VKM B-1763) (Desulfovibrio salexigens).